The primary structure comprises 114 residues: UPF0145 protein PF1756 (114 aa).

Belongs to the UPF0145 family.

The sequence is that of UPF0145 protein PF1756 from Pyrococcus furiosus (strain ATCC 43587 / DSM 3638 / JCM 8422 / Vc1).